The chain runs to 278 residues: Elongation factor Ts (278 aa).

The segment at 82-85 is involved in Mg(2+) ion dislocation from EF-Tu; it reads TDFV.

Belongs to the EF-Ts family.

The protein resides in the cytoplasm. Associates with the EF-Tu.GDP complex and induces the exchange of GDP to GTP. It remains bound to the aminoacyl-tRNA.EF-Tu.GTP complex up to the GTP hydrolysis stage on the ribosome. The chain is Elongation factor Ts from Streptomyces avermitilis (strain ATCC 31267 / DSM 46492 / JCM 5070 / NBRC 14893 / NCIMB 12804 / NRRL 8165 / MA-4680).